The chain runs to 311 residues: Olfactory receptor 10J4 (311 aa).

Residues 1 to 29 (MPRPNFMAVTEFTFEGFSIFEWHHRLILF) lie on the Extracellular side of the membrane. Residues 30–50 (VIFLVLYVLTLASNAIILIVI) form a helical membrane-spanning segment. Over 51-57 (RLNHQLH) the chain is Cytoplasmic. Residues 58–78 (TPMYFFLSVLSISETYYTVAI) form a helical membrane-spanning segment. The Extracellular segment spans residues 79-98 (NPQMLSGLLSPQQTISIPGC). A disulfide bridge links cysteine 98 with cysteine 180. The helical transmembrane segment at 99-119 (AAQLFFYLTFGVNKCFLLTAM) threads the bilayer. The Cytoplasmic segment spans residues 120 to 149 (GYDHYVAICNPLQYSVIMGKKACIQLVSGS). A helical membrane pass occupies residues 150 to 170 (WNIGLSTAIIQVSSVFSLPFC). Residues 171–202 (DANLISHFFCDIRPIMKLACADTTIKEFITLL) lie on the Extracellular side of the membrane. The helical transmembrane segment at 203 to 223 (ISLCVLVLPMVLIFISYVLIV) threads the bilayer. Residues 224–237 (TTILKIASAEGRRK) are Cytoplasmic-facing. A helical transmembrane segment spans residues 238 to 254 (AFATCASHLTVVIVHYG). The Extracellular portion of the chain corresponds to 255 to 272 (RTSFIYLKPKSQNSLQDR). Residues 273–292 (LISVTYTVITPLLNPVVYSL) form a helical membrane-spanning segment. Residues 293–311 (RNKEVKDALLRALGRKPLS) lie on the Cytoplasmic side of the membrane.

It belongs to the G-protein coupled receptor 1 family.

Its subcellular location is the cell membrane. Its function is as follows. Odorant receptor. This Homo sapiens (Human) protein is Olfactory receptor 10J4 (OR10J4).